Consider the following 120-residue polypeptide: Large ribosomal subunit protein bL20 (120 aa).

It belongs to the bacterial ribosomal protein bL20 family.

Its function is as follows. Binds directly to 23S ribosomal RNA and is necessary for the in vitro assembly process of the 50S ribosomal subunit. It is not involved in the protein synthesizing functions of that subunit. The polypeptide is Large ribosomal subunit protein bL20 (Pseudoalteromonas translucida (strain TAC 125)).